The primary structure comprises 272 residues: 2-amino-3,7-dideoxy-D-threo-hept-6-ulosonate synthase (272 aa).

Residue Asp-33 is the Proton acceptor of the active site. 1-deoxy-D-threo-hexo-2,5-diulose 6-phosphate is bound by residues 33–37 (DHGVS) and 153–155 (YPR). Tyr-153 serves as the catalytic Proton donor. The active-site Schiff-base intermediate with substrate is the Lys-184. 1-deoxy-D-threo-hexo-2,5-diulose 6-phosphate is bound by residues 209–210 (GG) and 237–238 (GR).

Belongs to the DeoC/FbaB aldolase family. ADHS subfamily. As to quaternary structure, homodecamer.

It catalyses the reaction 1-deoxy-D-threo-hexo-2,5-diulose 6-phosphate + L-aspartate 4-semialdehyde = 2,3-dioxopropyl phosphate + 2-amino-2,3,7-trideoxy-D-lyxo-hept-6-ulosonate. Catalyzes a transaldol reaction between 6-deoxy-5-ketofructose 1-phosphate (DKFP) and L-aspartate semialdehyde (ASA) with an elimination of hydroxypyruvaldehyde phosphate to yield 2-amino-3,7-dideoxy-D-threo-hept-6-ulosonate (ADH). Plays a key role in an alternative pathway of the biosynthesis of 3-dehydroquinate (DHQ), which is involved in the canonical pathway for the biosynthesis of aromatic amino acids and which is also a precursor for the biosynthesis of p-aminobenzoic acid (PABA) in M.maripaludis. Does not possess fructose-bisphosphate (FBP) aldolase activity. The polypeptide is 2-amino-3,7-dideoxy-D-threo-hept-6-ulosonate synthase (Methanococcus maripaludis (strain DSM 14266 / JCM 13030 / NBRC 101832 / S2 / LL)).